The following is a 121-amino-acid chain: Large ribosomal subunit protein bL20 (121 aa).

Belongs to the bacterial ribosomal protein bL20 family.

Its function is as follows. Binds directly to 23S ribosomal RNA and is necessary for the in vitro assembly process of the 50S ribosomal subunit. It is not involved in the protein synthesizing functions of that subunit. The sequence is that of Large ribosomal subunit protein bL20 from Beijerinckia indica subsp. indica (strain ATCC 9039 / DSM 1715 / NCIMB 8712).